The primary structure comprises 335 residues: uncharacterized protein (335 aa).

Disordered stretches follow at residues 153–174, 218–239, and 254–295; these read LNDKEDEEKLDQTTESEESDRI, HTSVRRSMSSVSSSASSTQEEV, and RCKV…PVTS. Acidic residues predominate over residues 156-170; sequence KEDEEKLDQTTESEE. Composition is skewed to low complexity over residues 222–234 and 275–295; these read RRSMSSVSSSASS and THTSVSSLSVHSVSPTPPVTS.

This is an uncharacterized protein from Caenorhabditis elegans.